Reading from the N-terminus, the 277-residue chain is Hemin import ATP-binding protein HmuV (277 aa).

Residues 19-259 form the ABC transporter domain; that stretch reads VEVADLNYSV…AIIEEAFGHR (241 aa). 51–58 serves as a coordination point for ATP; that stretch reads GRNGAGKS.

This sequence belongs to the ABC transporter superfamily. Heme (hemin) importer (TC 3.A.1.14.5) family. As to quaternary structure, the complex is composed of two ATP-binding proteins (HmuV), two transmembrane proteins (HmuU) and a solute-binding protein (HmuT).

It is found in the cell membrane. Part of the ABC transporter complex HmuTUV involved in hemin import. Responsible for energy coupling to the transport system. This is Hemin import ATP-binding protein HmuV from Deinococcus geothermalis (strain DSM 11300 / CIP 105573 / AG-3a).